Consider the following 244-residue polypeptide: 2-C-methyl-D-erythritol 4-phosphate cytidylyltransferase (244 aa).

The protein belongs to the IspD/TarI cytidylyltransferase family. IspD subfamily.

The catalysed reaction is 2-C-methyl-D-erythritol 4-phosphate + CTP + H(+) = 4-CDP-2-C-methyl-D-erythritol + diphosphate. Its pathway is isoprenoid biosynthesis; isopentenyl diphosphate biosynthesis via DXP pathway; isopentenyl diphosphate from 1-deoxy-D-xylulose 5-phosphate: step 2/6. Functionally, catalyzes the formation of 4-diphosphocytidyl-2-C-methyl-D-erythritol from CTP and 2-C-methyl-D-erythritol 4-phosphate (MEP). The sequence is that of 2-C-methyl-D-erythritol 4-phosphate cytidylyltransferase from Prosthecochloris aestuarii (strain DSM 271 / SK 413).